Reading from the N-terminus, the 334-residue chain is Succinylglutamate desuccinylase (334 aa).

Zn(2+)-binding residues include His59, Glu62, and His151. Glu215 is a catalytic residue.

This sequence belongs to the AspA/AstE family. Succinylglutamate desuccinylase subfamily. Zn(2+) serves as cofactor.

The catalysed reaction is N-succinyl-L-glutamate + H2O = L-glutamate + succinate. It participates in amino-acid degradation; L-arginine degradation via AST pathway; L-glutamate and succinate from L-arginine: step 5/5. In terms of biological role, transforms N(2)-succinylglutamate into succinate and glutamate. The chain is Succinylglutamate desuccinylase from Pseudomonas fluorescens (strain SBW25).